The chain runs to 422 residues: Keratin, type II cytoskeletal 80 (422 aa).

The interval 1-82 (MACRSCVVGF…DPAIQQQKNN (82 aa)) is head. A Phosphoserine modification is found at S45. A coil 1A region spans residues 83-118 (EKEEMKVLNDKFASLIGKVQALEQRNQLLETRWHFL). The IF rod domain occupies 83–394 (EKEEMKVLND…KLMEGEESRM (312 aa)). Residues 119–135 (QSQDSATFDLGHLYEEY) form a linker 1 region. Residues 136–227 (QGRLQEELRK…SIYEQELKDL (92 aa)) form a coil 1B region. Residues 228-251 (AAQLKDVSVTVGMDSRCHIDLSGI) are linker 12. Residues 252–390 (VEEVKAQYDA…ATYRKLMEGE (139 aa)) form a coil 2 region. A tail region spans residues 391–422 (ESRMDMPSATVVSAVQARCRTAPTLPHPLCSL).

Belongs to the intermediate filament family. Heterotetramer of two type I and two type II keratins.

The protein is Keratin, type II cytoskeletal 80 (KRT80) of Bos taurus (Bovine).